A 312-amino-acid chain; its full sequence is Tyrosine recombinase XerC (312 aa).

The 92-residue stretch at 10–101 folds into the Core-binding (CB) domain; the sequence is PDLQAARESW…GIRSLLRFLE (92 aa). The Tyr recombinase domain occupies 122-306; that stretch reads SLPKPLTASD…DTARLLEIYE (185 aa). Residues R165, K190, H258, R261, and H284 contribute to the active site. The active-site O-(3'-phospho-DNA)-tyrosine intermediate is Y293.

The protein belongs to the 'phage' integrase family. XerC subfamily. In terms of assembly, forms a cyclic heterotetrameric complex composed of two molecules of XerC and two molecules of XerD.

Its subcellular location is the cytoplasm. Functionally, site-specific tyrosine recombinase, which acts by catalyzing the cutting and rejoining of the recombining DNA molecules. The XerC-XerD complex is essential to convert dimers of the bacterial chromosome into monomers to permit their segregation at cell division. It also contributes to the segregational stability of plasmids. The sequence is that of Tyrosine recombinase XerC from Mesorhizobium japonicum (strain LMG 29417 / CECT 9101 / MAFF 303099) (Mesorhizobium loti (strain MAFF 303099)).